The sequence spans 484 residues: Sodium/pantothenate symporter (484 aa).

13 helical membrane-spanning segments follow: residues 3-23, 45-65, 74-94, 124-144, 162-182, 190-210, 238-258, 273-293, 307-327, 366-386, 397-417, 424-444, and 446-466; these read LGII…AIFA, GFVL…FVGG, LGWV…LGAL, VWLS…VQFI, LLLF…RAVV, TVMI…LGGV, FMAS…HTAV, MLIG…AGAL, VIPT…FLAA, VSYF…FAAL, LFAF…GIYW, GALS…QLGI, and LFNF…FLVG.

The protein belongs to the sodium:solute symporter (SSF) (TC 2.A.21) family.

It localises to the cell inner membrane. The enzyme catalyses (R)-pantothenate(in) + Na(+)(in) = (R)-pantothenate(out) + Na(+)(out). Catalyzes the sodium-dependent uptake of extracellular pantothenate. The sequence is that of Sodium/pantothenate symporter (panF) from Haemophilus influenzae (strain ATCC 51907 / DSM 11121 / KW20 / Rd).